The sequence spans 137 residues: Chaperone protein YscB (137 aa).

In terms of assembly, interacts with SycN to form a complex which specifically binds to YopN.

It is found in the cytoplasm. The protein resides in the cell inner membrane. In terms of biological role, functions as a specific chaperone for YopN. It could facilitate the secretion and the subsequent translocation of YopN. The protein is Chaperone protein YscB (yscB) of Yersinia enterocolitica.